Reading from the N-terminus, the 180-residue chain is Large ribosomal subunit protein uL6 (180 aa).

It belongs to the universal ribosomal protein uL6 family. In terms of assembly, part of the 50S ribosomal subunit.

Functionally, this protein binds to the 23S rRNA, and is important in its secondary structure. It is located near the subunit interface in the base of the L7/L12 stalk, and near the tRNA binding site of the peptidyltransferase center. The chain is Large ribosomal subunit protein uL6 from Anaeromyxobacter dehalogenans (strain 2CP-1 / ATCC BAA-258).